The following is a 221-amino-acid chain: Abscisic acid receptor PYL1 (221 aa).

The segment covering 1 to 11 has biased composition (low complexity); sequence MANSESSSSPV. The tract at residues 1–22 is disordered; the sequence is MANSESSSSPVNEEENSQRIST. Position 2 is an N-acetylalanine (alanine 2). Residues 50–206 form an START-like region; it reads YQLGNGRCSS…NLQKLASITE (157 aa). Residues lysine 86, 116 to 121, 143 to 149, and glutamate 171 contribute to the abscisate site; these read ANTSRE and RLRNYKS. Positions 112–116 match the Gate loop motif; that stretch reads SGLPA. A Latch loop motif is present at residues 142-144; the sequence is HRL.

Belongs to the PYR/PYL/RCAR abscisic acid intracellular receptor family. Homodimer. Binds ABA on one subunit only. Interacts with HAB1, ABI1 and ABI2, and possibly with other PP2Cs. Binds to CARs protein in an ABA-independent manner, both at the plasma membrane and in the nucleus. Interacts directly with CAR1 and CAR4.

Its subcellular location is the cytoplasm. It localises to the nucleus. The protein localises to the cell membrane. Its function is as follows. Receptor for abscisic acid (ABA) required for ABA-mediated responses such as stomatal closure and germination inhibition. Inhibits the activity of group-A protein phosphatases type 2C (PP2Cs) when activated by ABA. Can be activated by both (-)-ABA and (+)-ABA. The chain is Abscisic acid receptor PYL1 (PYL1) from Arabidopsis thaliana (Mouse-ear cress).